Reading from the N-terminus, the 202-residue chain is UPF0637 protein Exig_2520 (202 aa).

The protein belongs to the UPF0637 family.

This is UPF0637 protein Exig_2520 from Exiguobacterium sibiricum (strain DSM 17290 / CCUG 55495 / CIP 109462 / JCM 13490 / 255-15).